Consider the following 254-residue polypeptide: Triosephosphate isomerase (254 aa).

Residue asparagine 10–lysine 12 coordinates substrate. Histidine 96 (electrophile) is an active-site residue. Glutamate 168 serves as the catalytic Proton acceptor. Residues glycine 174, serine 214, and glycine 235–glycine 236 contribute to the substrate site.

The protein belongs to the triosephosphate isomerase family. Homodimer.

It localises to the cytoplasm. It carries out the reaction D-glyceraldehyde 3-phosphate = dihydroxyacetone phosphate. Its pathway is carbohydrate biosynthesis; gluconeogenesis. The protein operates within carbohydrate degradation; glycolysis; D-glyceraldehyde 3-phosphate from glycerone phosphate: step 1/1. Involved in the gluconeogenesis. Catalyzes stereospecifically the conversion of dihydroxyacetone phosphate (DHAP) to D-glyceraldehyde-3-phosphate (G3P). This chain is Triosephosphate isomerase, found in Rhodopirellula baltica (strain DSM 10527 / NCIMB 13988 / SH1).